A 480-amino-acid chain; its full sequence is Gasdermin-C4 (480 aa).

Residues 1–226 (MGYSFDRASK…TCVILPSATK (226 aa)) are triggers pyroptosis.

The protein belongs to the gasdermin family. As to quaternary structure, homooligomer; homooligomeric ring-shaped pore complex containing 27-28 subunits when inserted in the membrane. In terms of processing, cleavage by CASP8 relieves autoinhibition by releasing the N-terminal moiety (Gasdermin-C4, N-terminal) that initiates pyroptosis. Palmitoylated.

It is found in the cytoplasm. The protein localises to the cytosol. It localises to the cell membrane. With respect to regulation, the full-length protein before cleavage is inactive: intramolecular interactions between N- and C-terminal domains mediate autoinhibition in the absence of activation signal. The intrinsic pyroptosis-inducing activity is carried by the released N-terminal moiety (Gasdermin-C4, N-terminal) following cleavage by caspase CASP8. Its function is as follows. This form constitutes the precursor of the pore-forming protein: upon cleavage, the released N-terminal moiety (Gasdermin-C4, N-terminal) binds to membranes and forms pores, triggering pyroptosis. Functionally, pore-forming protein that causes membrane permeabilization and pyroptosis. Produced by the cleavage of gasdermin-C4 by caspase CASP8 in response to death signals. After cleavage, moves to the plasma membrane where it strongly binds to membrane inner leaflet lipids. Homooligomerizes within the membrane and forms pores of 10-15 nanometers (nm) of inner diameter, triggering pyroptosis. The chain is Gasdermin-C4 from Mus musculus (Mouse).